The chain runs to 457 residues: Multidrug resistance protein MdtK (457 aa).

A run of 12 helical transmembrane segments spans residues 11–31 (LLAL…MGFV), 53–73 (IWLP…PVIA), 93–113 (WLAG…GYII), 127–147 (AVGY…FQVA), 160–180 (GMVM…IFIY), 188–208 (LGGI…FIAM), 243–263 (LPIA…ALLV), 276–296 (IALN…AAVT), 314–334 (AART…IFTV), 350–370 (VVAL…SDSI), 387–407 (IFFI…YILA), and 418–438 (PAGF…LMML).

The protein belongs to the multi antimicrobial extrusion (MATE) (TC 2.A.66.1) family. MdtK subfamily.

It localises to the cell inner membrane. Multidrug efflux pump that functions probably as a Na(+)/drug antiporter. The polypeptide is Multidrug resistance protein MdtK (Salmonella agona (strain SL483)).